The primary structure comprises 108 residues: MNIMSSLTNAGRGVVNTVGGAAQGINSVKSSADRNIALTKNTGSTDSIDATRSSISKGDAKSAELDGTANEENGLLRETSMLAGFEDKKEALSNQIVASKIRNSVVQF.

The segment covering 41–56 (NTGSTDSIDATRSSIS) has biased composition (polar residues). A disordered region spans residues 41–72 (NTGSTDSIDATRSSISKGDAKSAELDGTANEE).

Belongs to the HrpA type 1 family.

Its subcellular location is the secreted. The protein resides in the fimbrium. Major structural protein of the hrp pilus, which is a component of the type III secretion system (T3SS, Hrp secretion system) required for effector protein delivery, parasitism, and pathogenicity. The hrp pilus functions as a conduit for protein delivery into the host cell. Also, affects the expression of T3SS-associated genes. Required for full expression of genes that encode regulatory, secretion, and effector proteins of the T3SS. HrpA-mediated gene regulation apparently is through effect on the mRNA level of hrpR and hrpS. This chain is Hrp pili protein HrpA (hrpA), found in Pseudomonas savastanoi pv. phaseolicola (Pseudomonas syringae pv. phaseolicola).